Reading from the N-terminus, the 430-residue chain is Purine nucleoside phosphorylase LACC1 (430 aa).

At K247 the chain carries N6-acetyllysine. Residues H250, C284, and H301 each coordinate Zn(2+).

This sequence belongs to the purine nucleoside phosphorylase YfiH/LACC1 family. Interacts with FASN. Interacts with SDHA. Interacts with ATF6, EIF2AK3 and ERN1. Phosphorylated on tyrosine residues. In terms of tissue distribution, predominantly expressed in myeloid cells. Highly expressed in primary macrophages and dendritic cells sorted from the peritoneum or spleen, respectively (at protein level).

It localises to the cytoplasm. The protein localises to the nucleus. It is found in the endoplasmic reticulum. Its subcellular location is the peroxisome. It catalyses the reaction adenosine + phosphate = alpha-D-ribose 1-phosphate + adenine. The enzyme catalyses inosine + phosphate = alpha-D-ribose 1-phosphate + hypoxanthine. It carries out the reaction guanosine + phosphate = alpha-D-ribose 1-phosphate + guanine. The catalysed reaction is S-methyl-5'-thioadenosine + phosphate = 5-(methylsulfanyl)-alpha-D-ribose 1-phosphate + adenine. It catalyses the reaction adenosine + H2O + H(+) = inosine + NH4(+). Functionally, purine nucleoside enzyme that catalyzes the phosphorolysis of adenosine, guanosine and inosine nucleosides, yielding D-ribose 1-phosphate and the respective free bases, adenine, guanine and hypoxanthine. Also catalyzes the phosphorolysis of S-methyl-5'-thioadenosine into adenine and S-methyl-5-thio-alpha-D-ribose 1-phosphate. Also has adenosine deaminase activity. Acts as a regulator of innate immunity in macrophages by modulating the purine nucleotide metabolism, thereby regulating the metabolic function and bioenergetic state of macrophages. Enables a purine nucleotide cycle between adenosine and inosine monophosphate and adenylosuccinate that prevents cytoplasmic acidification and balances the cytoplasmic-mitochondrial redox interface. The purine nucleotide cycle consumes aspartate and releases fumarate in a manner involving fatty acid oxidation and ATP-citrate lyase activity. Participates in pattern recognition receptor-induced cytokines in macrophages: associates with the NOD2-signaling complex and promotes optimal NOD2-induced signaling, cytokine secretion and bacterial clearance. Localizes to the endoplasmic reticulum upon PRR stimulation of macrophages and associates with endoplasmic reticulum-stress sensors, promoting the endoplasmic reticulum unfolded protein response (UPR). Does not show laccase activity. This is Purine nucleoside phosphorylase LACC1 from Mus musculus (Mouse).